The chain runs to 274 residues: Formamidopyrimidine-DNA glycosylase (274 aa).

The active-site Schiff-base intermediate with DNA is proline 2. Glutamate 3 (proton donor) is an active-site residue. Lysine 59 serves as the catalytic Proton donor; for beta-elimination activity. Residues histidine 93, arginine 112, and lysine 153 each contribute to the DNA site. Residues glutamine 238–glutamine 272 form an FPG-type zinc finger. The active-site Proton donor; for delta-elimination activity is arginine 262.

Belongs to the FPG family. Monomer. Requires Zn(2+) as cofactor.

The enzyme catalyses Hydrolysis of DNA containing ring-opened 7-methylguanine residues, releasing 2,6-diamino-4-hydroxy-5-(N-methyl)formamidopyrimidine.. It catalyses the reaction 2'-deoxyribonucleotide-(2'-deoxyribose 5'-phosphate)-2'-deoxyribonucleotide-DNA = a 3'-end 2'-deoxyribonucleotide-(2,3-dehydro-2,3-deoxyribose 5'-phosphate)-DNA + a 5'-end 5'-phospho-2'-deoxyribonucleoside-DNA + H(+). Its function is as follows. Involved in base excision repair of DNA damaged by oxidation or by mutagenic agents. Acts as a DNA glycosylase that recognizes and removes damaged bases. Has a preference for oxidized purines, such as 7,8-dihydro-8-oxoguanine (8-oxoG). Has AP (apurinic/apyrimidinic) lyase activity and introduces nicks in the DNA strand. Cleaves the DNA backbone by beta-delta elimination to generate a single-strand break at the site of the removed base with both 3'- and 5'-phosphates. The polypeptide is Formamidopyrimidine-DNA glycosylase (Mycoplasma mobile (strain ATCC 43663 / 163K / NCTC 11711) (Mesomycoplasma mobile)).